The primary structure comprises 242 residues: Ubiquinone biosynthesis O-methyltransferase (242 aa).

4 residues coordinate S-adenosyl-L-methionine: R44, G64, D85, and M129.

The protein belongs to the methyltransferase superfamily. UbiG/COQ3 family.

It carries out the reaction a 3-demethylubiquinol + S-adenosyl-L-methionine = a ubiquinol + S-adenosyl-L-homocysteine + H(+). The catalysed reaction is a 3-(all-trans-polyprenyl)benzene-1,2-diol + S-adenosyl-L-methionine = a 2-methoxy-6-(all-trans-polyprenyl)phenol + S-adenosyl-L-homocysteine + H(+). The protein operates within cofactor biosynthesis; ubiquinone biosynthesis. O-methyltransferase that catalyzes the 2 O-methylation steps in the ubiquinone biosynthetic pathway. This Klebsiella pneumoniae subsp. pneumoniae (strain ATCC 700721 / MGH 78578) protein is Ubiquinone biosynthesis O-methyltransferase.